The chain runs to 280 residues: Meiotic spindle formation protein 2 (280 aa).

The segment at Met1–Val104 is disordered. Residues Leu72–Ser92 show a composition bias toward basic and acidic residues. Over residues Ser93 to Val104 the composition is skewed to low complexity.

Interacts with mei-1.

The protein resides in the cytoplasm. It localises to the cytoskeleton. It is found in the spindle pole. In terms of biological role, forms a heterodimeric complex in conjunction with mei-1 which severs microtubules in vitro in an ATP-dependent manner. This activity may promote rapid reorganization of cellular microtubule arrays. May act to target mei-1 within the cell. Required specifically for meiotic spindle formation in the female germline. The chain is Meiotic spindle formation protein 2 (mei-2) from Caenorhabditis elegans.